The sequence spans 233 residues: Small ribosomal subunit protein uS2 (233 aa).

The protein belongs to the universal ribosomal protein uS2 family.

This chain is Small ribosomal subunit protein uS2, found in Prochlorococcus marinus (strain MIT 9312).